A 238-amino-acid chain; its full sequence is Neuromodulin (238 aa).

The interval 1–238 is disordered; sequence MLCCMRRTKQ…EEPEADQEHA (238 aa). Residues Cys-3 and Cys-4 are each lipidated (S-palmitoyl cysteine). Basic and acidic residues predominate over residues 9-32; sequence KQVEKNDDDQKIEQDGIKPEDKAH. In terms of domain architecture, IQ spans 31-60; sequence AHKAATKIQASFRGHITRKKLKGEKKDDVQ. Ser-41 is modified (phosphoserine; by PHK and PKC). Basic and acidic residues predominate over residues 54–83; that stretch reads EKKDDVQAAEAEANKKDEAPVADGVEKKGE. The segment covering 84-95 has biased composition (low complexity); it reads GTTTAEAAPATG. Over residues 97–116 the composition is skewed to basic and acidic residues; the sequence is KPDEPGKAGETPSEEKKGEG. A compositionally biased stretch (low complexity) spans 119–130; the sequence is ATEQAAPQAPAS. Over residues 139 to 154 the composition is skewed to polar residues; it reads ETESATKASTDNSPSS. Ser-151, Ser-153, and Ser-154 each carry phosphoserine. Positions 155–167 are enriched in basic and acidic residues; the sequence is KAEDAPAKEEPKQ. Residues 168–199 are compositionally biased toward low complexity; that stretch reads ADVPAAVTAAAATTPAAEDAAAKATAQPPTET. A Phosphothreonine modification is found at Thr-181. A phosphoserine; by CK2 mark is found at Ser-202 and Ser-203. Positions 213–225 are enriched in basic and acidic residues; sequence DETKPKESARQDE. Residues 226–238 show a composition bias toward acidic residues; it reads GKEEEPEADQEHA.

Belongs to the neuromodulin family. As to quaternary structure, identified in a complex containing FGFR4, NCAM1, CDH2, PLCG1, FRS2, SRC, SHC1, GAP43 and CTTN. Interacts (via IQ domain) with calmodulin. Binds calmodulin with a greater affinity in the absence of Ca(2+) than in its presence. Phosphorylated. Phosphorylation of this protein by a protein kinase C is specifically correlated with certain forms of synaptic plasticity. Post-translationally, palmitoylated by ZDHHC3. Palmitoylation is regulated by ARF6 and is essential for plasma membrane association and axonal and dendritic filopodia induction. Deacylated by LYPLA2.

The protein localises to the cell membrane. The protein resides in the cell projection. Its subcellular location is the growth cone membrane. It is found in the synapse. It localises to the filopodium membrane. The protein localises to the perikaryon. The protein resides in the dendrite. Its subcellular location is the axon. It is found in the cytoplasm. In terms of biological role, this protein is associated with nerve growth. It is a major component of the motile 'growth cones' that form the tips of elongating axons. Plays a role in axonal and dendritic filopodia induction. This Homo sapiens (Human) protein is Neuromodulin (GAP43).